Here is a 421-residue protein sequence, read N- to C-terminus: Imidazolonepropionase (421 aa).

Residues His-81 and His-83 each contribute to the Fe(3+) site. Residues His-81 and His-83 each coordinate Zn(2+). The 4-imidazolone-5-propanoate site is built by Arg-90, Tyr-153, and His-186. Residue Tyr-153 participates in N-formimidoyl-L-glutamate binding. His-251 is a binding site for Fe(3+). Residue His-251 participates in Zn(2+) binding. Residue Glu-254 coordinates 4-imidazolone-5-propanoate. Fe(3+) is bound at residue Asp-326. Residue Asp-326 participates in Zn(2+) binding. Residues Asn-328 and Gly-330 each coordinate N-formimidoyl-L-glutamate. Ser-331 is a 4-imidazolone-5-propanoate binding site.

The protein belongs to the metallo-dependent hydrolases superfamily. HutI family. The cofactor is Zn(2+). It depends on Fe(3+) as a cofactor.

The protein localises to the cytoplasm. The catalysed reaction is 4-imidazolone-5-propanoate + H2O = N-formimidoyl-L-glutamate. It participates in amino-acid degradation; L-histidine degradation into L-glutamate; N-formimidoyl-L-glutamate from L-histidine: step 3/3. Catalyzes the hydrolytic cleavage of the carbon-nitrogen bond in imidazolone-5-propanoate to yield N-formimidoyl-L-glutamate. It is the third step in the universal histidine degradation pathway. The polypeptide is Imidazolonepropionase (Streptococcus sanguinis (strain SK36)).